Consider the following 184-residue polypeptide: UPF0669 protein C6orf120 homolog (184 aa).

An N-terminal signal peptide occupies residues 1–23; it reads MAAPWTGALLLLLASQAVSSAQA. N-linked (GlcNAc...) asparagine glycosylation occurs at N47.

The protein belongs to the UPF0669 family.

It is found in the secreted. Its function is as follows. May be involved in induction of apoptosis in CD4(+) T-cells, but not CD8(+) T-cells or hepatocytes. In Bos taurus (Bovine), this protein is UPF0669 protein C6orf120 homolog.